The sequence spans 215 residues: Adenylate kinase (215 aa).

10-15 (GAGKGT) serves as a coordination point for ATP. The segment at 30–59 (STGDMLRAAVKAGSPLGQQVKGVMDSGGLV) is NMP. AMP is bound by residues threonine 31, arginine 36, 57 to 59 (GLV), 85 to 88 (GFPR), and glutamine 92. Residues 122–159 (GRRVHPASGRVYHTEHNPPKVAGKDDVTGEELIQREDD) form an LID region. ATP is bound by residues arginine 123 and 132–133 (VY). AMP is bound by residues arginine 156 and arginine 167. Glycine 201 contributes to the ATP binding site.

The protein belongs to the adenylate kinase family. In terms of assembly, monomer.

Its subcellular location is the cytoplasm. It catalyses the reaction AMP + ATP = 2 ADP. Its pathway is purine metabolism; AMP biosynthesis via salvage pathway; AMP from ADP: step 1/1. In terms of biological role, catalyzes the reversible transfer of the terminal phosphate group between ATP and AMP. Plays an important role in cellular energy homeostasis and in adenine nucleotide metabolism. This chain is Adenylate kinase, found in Pseudomonas aeruginosa (strain LESB58).